The following is a 282-amino-acid chain: Short-chain dehydrogenase/reductase prx7 (282 aa).

The NADP(+) site is built by asparagine 23, asparagine 70, tyrosine 150, lysine 154, valine 183, and threonine 185. Tyrosine 150 (proton acceptor) is an active-site residue. Catalysis depends on lysine 154, which acts as the Lowers pKa of active site Tyr.

This sequence belongs to the short-chain dehydrogenases/reductases (SDR) family.

The protein operates within sesquiterpene biosynthesis. In terms of biological role, short-chain dehydrogenase/reductase; part of the gene cluster that mediates the biosynthesis of PR-toxin, a bicyclic sesquiterpene belonging to the eremophilane class and acting as a mycotoxin. The first step of the pathway is catalyzed by the aristolochene synthase which performs the cyclization of trans,trans-farnesyl diphosphate (FPP) to the bicyclic sesquiterpene aristolochene. Following the formation of aristolochene, the non-oxygenated aristolochene is converted to the trioxygenated intermediate eremofortin B, via 7-epi-neopetasone. This conversion appears to involve three enzymes, a hydroxysterol oxidase-like enzyme, the quinone-oxidase prx3 that forms the quinone-type-structure in the bicyclic nucleus of aristolochene with the C8-oxo group and the C-3 hydroxyl group, and the P450 monooxygenase prx9 that introduces the epoxide at the double bond between carbons 1 and 2. No monoxy or dioxy-intermediates have been reported to be released to the broth, so these three early oxidative reactions may be coupled together. Eremofortin B is further oxidized by another P450 monooxygenase, that introduces a second epoxide between carbons 7 and 11 prior to acetylation to eremofortin A by the acetyltransferase prx11. The second epoxidation may be performed by a second P450 monooxygenase. After the acetylation step, eremofortin A is converted to eremofortin C and then to PR-toxin. First the conversion of eremofortin A to eremofortin C proceeds by oxidation of the side chain of the molecule at C-12 and is catalyzed by the short-chain oxidoreductase prx1. The cytochrome P450 monooxygenase prx8 also plays a role in this step. The primary alcohol formed at C-12 is finally oxidized by the short-chain alcohol dehydrogenase prx4 that forms PR-toxin. This chain is Short-chain dehydrogenase/reductase prx7, found in Penicillium rubens (strain ATCC 28089 / DSM 1075 / NRRL 1951 / Wisconsin 54-1255) (Penicillium chrysogenum).